The chain runs to 243 residues: Probable transcriptional regulatory protein BAPKO_0024/BafPKo_0025 (243 aa).

Belongs to the TACO1 family.

It is found in the cytoplasm. The sequence is that of Probable transcriptional regulatory protein BAPKO_0024/BafPKo_0025 from Borreliella afzelii (strain PKo) (Borrelia afzelii).